Consider the following 274-residue polypeptide: Dermonecrotic toxin SdSicTox-betaIIB1bx (274 aa).

Residue H5 is part of the active site. Positions 25 and 27 each coordinate Mg(2+). H41 serves as the catalytic Nucleophile. 2 disulfides stabilise this stretch: C45–C51 and C47–C190. D85 lines the Mg(2+) pocket.

Belongs to the arthropod phospholipase D family. Class II subfamily. Mg(2+) serves as cofactor. Expressed by the venom gland.

The protein localises to the secreted. The catalysed reaction is an N-(acyl)-sphingosylphosphocholine = an N-(acyl)-sphingosyl-1,3-cyclic phosphate + choline. It catalyses the reaction an N-(acyl)-sphingosylphosphoethanolamine = an N-(acyl)-sphingosyl-1,3-cyclic phosphate + ethanolamine. The enzyme catalyses a 1-acyl-sn-glycero-3-phosphocholine = a 1-acyl-sn-glycero-2,3-cyclic phosphate + choline. It carries out the reaction a 1-acyl-sn-glycero-3-phosphoethanolamine = a 1-acyl-sn-glycero-2,3-cyclic phosphate + ethanolamine. Dermonecrotic toxins cleave the phosphodiester linkage between the phosphate and headgroup of certain phospholipids (sphingolipid and lysolipid substrates), forming an alcohol (often choline) and a cyclic phosphate. This toxin acts on sphingomyelin (SM). It may also act on ceramide phosphoethanolamine (CPE), lysophosphatidylcholine (LPC) and lysophosphatidylethanolamine (LPE), but not on lysophosphatidylserine (LPS), and lysophosphatidylglycerol (LPG). It acts by transphosphatidylation, releasing exclusively cyclic phosphate products as second products. Induces dermonecrosis, hemolysis, increased vascular permeability, edema, inflammatory response, and platelet aggregation. This chain is Dermonecrotic toxin SdSicTox-betaIIB1bx, found in Sicarius cf. damarensis (strain GJB-2008) (Six-eyed sand spider).